The primary structure comprises 436 residues: Trigger factor (436 aa).

The PPIase FKBP-type domain occupies 161–248; that stretch reads TDRVTIDLYG…LKKVEQYRLP (88 aa).

It belongs to the FKBP-type PPIase family. Tig subfamily.

The protein resides in the cytoplasm. The catalysed reaction is [protein]-peptidylproline (omega=180) = [protein]-peptidylproline (omega=0). Involved in protein export. Acts as a chaperone by maintaining the newly synthesized protein in an open conformation. Functions as a peptidyl-prolyl cis-trans isomerase. In Baumannia cicadellinicola subsp. Homalodisca coagulata, this protein is Trigger factor.